The sequence spans 308 residues: Protoheme IX farnesyltransferase (308 aa).

9 helical membrane passes run 31–51 (VGIV…AFYF), 60–80 (LDIV…SCVI), 110–130 (ALWF…MTNL), 131–151 (TAAG…TMWS), 157–177 (VNTI…WTAV), 185–205 (AWVL…ALAI), 232–252 (IIIW…LGLP), 253–273 (IVIL…VGYR), and 285–305 (FVYS…FTLF).

This sequence belongs to the UbiA prenyltransferase family. Protoheme IX farnesyltransferase subfamily. In terms of assembly, interacts with CtaA.

The protein resides in the cell membrane. It carries out the reaction heme b + (2E,6E)-farnesyl diphosphate + H2O = Fe(II)-heme o + diphosphate. The protein operates within porphyrin-containing compound metabolism; heme O biosynthesis; heme O from protoheme: step 1/1. Converts heme B (protoheme IX) to heme O by substitution of the vinyl group on carbon 2 of heme B porphyrin ring with a hydroxyethyl farnesyl side group. This is Protoheme IX farnesyltransferase from Bacillus licheniformis (strain ATCC 14580 / DSM 13 / JCM 2505 / CCUG 7422 / NBRC 12200 / NCIMB 9375 / NCTC 10341 / NRRL NRS-1264 / Gibson 46).